Here is a 453-residue protein sequence, read N- to C-terminus: Ribulose bisphosphate carboxylase large chain (453 aa).

Positions M1–S2 are excised as a propeptide. P3 bears the N-acetylproline mark. K14 bears the N6,N6,N6-trimethyllysine mark. Positions 123 and 173 each coordinate substrate. The Proton acceptor role is filled by K175. K177 is a substrate binding site. Positions 201, 203, and 204 each coordinate Mg(2+). The residue at position 201 (K201) is an N6-carboxylysine. Catalysis depends on H294, which acts as the Proton acceptor. Residues R295, H327, and S379 each coordinate substrate.

It belongs to the RuBisCO large chain family. Type I subfamily. In terms of assembly, heterohexadecamer of 8 large chains and 8 small chains; disulfide-linked. The disulfide link is formed within the large subunit homodimers. Mg(2+) is required as a cofactor. In terms of processing, the disulfide bond which can form in the large chain dimeric partners within the hexadecamer appears to be associated with oxidative stress and protein turnover.

Its subcellular location is the plastid. It localises to the chloroplast. The enzyme catalyses 2 (2R)-3-phosphoglycerate + 2 H(+) = D-ribulose 1,5-bisphosphate + CO2 + H2O. It carries out the reaction D-ribulose 1,5-bisphosphate + O2 = 2-phosphoglycolate + (2R)-3-phosphoglycerate + 2 H(+). In terms of biological role, ruBisCO catalyzes two reactions: the carboxylation of D-ribulose 1,5-bisphosphate, the primary event in carbon dioxide fixation, as well as the oxidative fragmentation of the pentose substrate in the photorespiration process. Both reactions occur simultaneously and in competition at the same active site. The protein is Ribulose bisphosphate carboxylase large chain of Galium album (White bedstraw).